Reading from the N-terminus, the 63-residue chain is Large ribosomal subunit protein uL29 (63 aa).

This sequence belongs to the universal ribosomal protein uL29 family.

This chain is Large ribosomal subunit protein uL29, found in Shigella dysenteriae serotype 1 (strain Sd197).